A 324-amino-acid chain; its full sequence is ATP-dependent 6-phosphofructokinase (324 aa).

G11 provides a ligand contact to ATP. Residue 21–25 (RAVVR) coordinates ADP. Residues 72-73 (RE) and 102-105 (GNGS) each bind ATP. N103 is a binding site for Mg(2+). Substrate is bound at residue 126 to 128 (TID). The Proton acceptor role is filled by D128. R155 contributes to the ADP binding site. Substrate contacts are provided by residues R163 and 170 to 172 (MGR). ADP contacts are provided by residues 186–188 (GAD), R212, and 214–216 (KKF). Substrate is bound by residues E223, R248, and 254 to 257 (YIQR).

Belongs to the phosphofructokinase type A (PFKA) family. ATP-dependent PFK group I subfamily. Prokaryotic clade 'B1' sub-subfamily. In terms of assembly, homotetramer. Mg(2+) is required as a cofactor.

The protein resides in the cytoplasm. The catalysed reaction is beta-D-fructose 6-phosphate + ATP = beta-D-fructose 1,6-bisphosphate + ADP + H(+). The protein operates within carbohydrate degradation; glycolysis; D-glyceraldehyde 3-phosphate and glycerone phosphate from D-glucose: step 3/4. Allosterically activated by ADP and other diphosphonucleosides, and allosterically inhibited by phosphoenolpyruvate. Catalyzes the phosphorylation of D-fructose 6-phosphate to fructose 1,6-bisphosphate by ATP, the first committing step of glycolysis. The chain is ATP-dependent 6-phosphofructokinase from Persephonella marina (strain DSM 14350 / EX-H1).